The chain runs to 345 residues: Probable G-protein coupled receptor 139 (345 aa).

The Extracellular portion of the chain corresponds to 1 to 21; sequence MEHTHAHLAANSSACGLGFVP. Residue asparagine 11 is glycosylated (N-linked (GlcNAc...) asparagine). A helical transmembrane segment spans residues 22-42; that stretch reads VVYYSFLLCLGLPANILTVII. At 43–57 the chain is on the cytoplasmic side; the sequence is LSQLVARRQKSSYNY. A helical membrane pass occupies residues 58–78; it reads LLALAAADILVLFFIVFVDFL. Over 79-94 the chain is Extracellular; that stretch reads LEDFILTMQMPLIPDK. A helical transmembrane segment spans residues 95 to 115; sequence IIEVLEFSSIHTSIWITVPLT. Residues 116–140 are Cytoplasmic-facing; the sequence is VDRYIAVCHPLKYHTVSYPARTRKV. Residues 141–161 traverse the membrane as a helical segment; the sequence is ILSVYITCFLTSIPYYWWPNI. The Extracellular segment spans residues 162 to 173; the sequence is WTEDYISTSMHH. Residues 174–194 traverse the membrane as a helical segment; the sequence is VLVWIHCFTVYLVPCSIFFIL. Residues 195–220 are Cytoplasmic-facing; sequence NSIIVYKLRRKSNFRLRGYSTGKTTA. The chain crosses the membrane as a helical span at residues 221-241; the sequence is ILFTITSIFATLWAPRIIMIL. The Extracellular portion of the chain corresponds to 242 to 260; the sequence is YHLYGAPIQNPWLVHIMLD. A helical transmembrane segment spans residues 261-281; that stretch reads VANMLALLNTAINFFLYCFIS. At 282–345 the chain is on the cytoplasmic side; that stretch reads KRFRTMAAAT…KHGKPIKVSP (64 aa).

It belongs to the G-protein coupled receptor 1 family. As to expression, expressed almost exclusively in the brain. Abundantly expressed in the ventrolateral region of caudate putamen, the habenular nucleus, the zona incerta, and the medial mammillary nucleus.

The protein resides in the cell membrane. Orphan receptor. Seems to act through a G(q/11)-mediated pathway. This Mus musculus (Mouse) protein is Probable G-protein coupled receptor 139 (Gpr139).